The primary structure comprises 591 residues: Formate--tetrahydrofolate ligase (591 aa).

Thr-74–Ser-81 serves as a coordination point for ATP.

The protein belongs to the formate--tetrahydrofolate ligase family.

The enzyme catalyses (6S)-5,6,7,8-tetrahydrofolate + formate + ATP = (6R)-10-formyltetrahydrofolate + ADP + phosphate. The protein operates within one-carbon metabolism; tetrahydrofolate interconversion. In Lawsonia intracellularis (strain PHE/MN1-00), this protein is Formate--tetrahydrofolate ligase.